The following is a 273-amino-acid chain: Testis-specific serine/threonine-protein kinase 6 (273 aa).

Positions 12–267 constitute a Protein kinase domain; that stretch reads YKLGRTIGEG…AGQVARNGWL (256 aa). Residues 18–26 and lysine 41 each bind ATP; that span reads IGEGSYSKV. The Proton acceptor role is filled by aspartate 135.

This sequence belongs to the protein kinase superfamily. CAMK Ser/Thr protein kinase family. In terms of assembly, microtubule inner protein component of sperm flagellar doublet microtubules. Interacts with HSP90; this interaction stabilizes and activates TSSK6. Interacts with the heat shock proteins HSPCB, HSPA8 and HSPA1A. These interactions appear to be required for TSSK6 kinase activity. Interacts with TSACC; this interaction is direct and recruits TSACC to HSP90, which is essential for kinase activity. The cofactor is Mg(2+). Post-translationally, autophosphorylated. In terms of processing, ubiquitinated; HSP90 activity negatively regulates ubiquitination and degradation. Expressed in the testis, localized to the heads of elongating spermatids.

It is found in the cytoplasm. Its subcellular location is the cytoskeleton. It localises to the flagellum axoneme. The protein resides in the nucleus. It catalyses the reaction L-seryl-[protein] + ATP = O-phospho-L-seryl-[protein] + ADP + H(+). The enzyme catalyses L-threonyl-[protein] + ATP = O-phospho-L-threonyl-[protein] + ADP + H(+). In terms of biological role, serine/threonine-protein kinase component of the sperm flagellar doublet microtubules. May act as a regulator of sperm motility by mediating phosphorylation of sperm doublet microtubule proteins. Plays a role in DNA condensation during postmeiotic chromatin remodeling and histone-to-protamine transition during spermatogenesis. The chain is Testis-specific serine/threonine-protein kinase 6 from Mus musculus (Mouse).